A 160-amino-acid chain; its full sequence is Tumor suppressor ARF (160 aa).

An interaction with CDK5RAP3 and MDM2 region spans residues 1-63; the sequence is MGRRFVVTVR…RRGPQPHPGP (63 aa). Disordered stretches follow at residues 49-74 and 90-116; these read PERI…QSGS and HPLP…GRGA.

In terms of assembly, does not interact with cyclins, CDK1, CDK2, CDK4, CDK5 or CDK6. Binds to BCL6, E2F1, HUWE1, MDM2, MYC, NPM1/B23, TOP1/TOPOI and UBE2I/UBC9. Interacts with TBRG1 and COMMD1. Interacts with CDKN2AIP and E4F1. Interacts with CDK5RAP3 and MDM2; form a ternary complex involved in regulation of p53/TP53. Interacts with NOP53; the interaction is direct and promotes ARF nucleoplasmic relocalization and ubiquitin-mediated proteasomal degradation. Interacts with TTF1 (via the N-terminal region (NRD) and a C-terminal region); the interaction is direct and inhibits the nucleolar localization of TTF1. In terms of processing, ubiquitinated in normal cells by TRIP12 via the ubiquitin fusion degradation (UFD) pathway, a process that mediates ubiquitination at the N-terminus, regardless of the absence of lysine residues. Ubiquitination leads to its proteasomal degradation. In cancer cells, however, TRIP12 is located in a different cell compartment, preventing ubiquitination and degradation. In terms of tissue distribution, widely expressed with very low levels in kidney and colon.

The protein resides in the nucleus. Its subcellular location is the nucleolus. The protein localises to the nucleoplasm. In terms of biological role, capable of inducing cell cycle arrest in G1 and G2 phases. Acts as a tumor suppressor. Binds to MDM2 and blocks its nucleocytoplasmic shuttling by sequestering it in the nucleolus. This inhibits the oncogenic action of MDM2 by blocking MDM2-induced degradation of p53 and enhancing p53-dependent transactivation and apoptosis. Also induces G2 arrest and apoptosis in a p53-independent manner by preventing the activation of cyclin B1/CDC2 complexes. Binds to BCL6 and down-regulates BCL6-induced transcriptional repression. Binds to E2F1 and MYC and blocks their transcriptional activator activity but has no effect on MYC transcriptional repression. Binds to TOP1/TOPOI and stimulates its activity. This complex binds to rRNA gene promoters and may play a role in rRNA transcription and/or maturation. Interacts with NPM1/B23 and promotes its polyubiquitination and degradation, thus inhibiting rRNA processing. Plays a role in inhibiting ribosome biogenesis, perhaps by binding to the nucleolar localization sequence of transcription termination factor TTF1, and thereby preventing nucleolar localization of TTF1. Interacts with COMMD1 and promotes its 'Lys63'-linked polyubiquitination. Interacts with UBE2I/UBC9 and enhances sumoylation of a number of its binding partners including MDM2 and E2F1. Binds to HUWE1 and represses its ubiquitin ligase activity. May play a role in controlling cell proliferation and apoptosis during mammary gland development. This Rattus norvegicus (Rat) protein is Tumor suppressor ARF.